Reading from the N-terminus, the 1296-residue chain is Nuclear factor related to kappa-B-binding protein (1296 aa).

Positions 39 to 156 (PEDLLEDPEI…LKQILASRSD (118 aa)) constitute a DEUBAD domain. Disordered stretches follow at residues 165–186 (GPALPFPHKHHSPSRSPEEREW) and 204–232 (GDTALSSDEEDLSSWLPSSPARSPSPAVP). Residues 216-232 (SSWLPSSPARSPSPAVP) show a composition bias toward low complexity. A phosphoserine mark is found at Ser228 and Ser298. A Glycyl lysine isopeptide (Lys-Gly) (interchain with G-Cter in SUMO2) cross-link involves residue Lys327. The residue at position 351 (Ser351) is a Phosphoserine. Residues 370-495 (LGINEISSSF…FCKENEDSSD (126 aa)) form a winged-helix like domain region. A Glycyl lysine isopeptide (Lys-Gly) (interchain with G-Cter in SUMO2) cross-link involves residue Lys469. Lys488 participates in a covalent cross-link: Glycyl lysine isopeptide (Lys-Gly) (interchain with G-Cter in SUMO1); alternate. Lys488 participates in a covalent cross-link: Glycyl lysine isopeptide (Lys-Gly) (interchain with G-Cter in SUMO2); alternate. 2 disordered regions span residues 663-758 (QAQA…SSGV) and 1015-1036 (HAADSPAKAPSASVPSSAPAGT). Low complexity predominate over residues 700–713 (PSEQSQMSLSDSSM). Pro residues predominate over residues 726–737 (PALPTPISPPPV). Residues 741 to 758 (NRSGSSTVSEPAQSSSGV) show a composition bias toward polar residues. A compositionally biased stretch (low complexity) spans 1016-1034 (AADSPAKAPSASVPSSAPA). Ser1019 is subject to Phosphoserine. Residue Lys1234 is modified to N6-acetyllysine. A Phosphoserine modification is found at Ser1288.

Belongs to the NFRKB family. As to quaternary structure, component of the chromatin remodeling INO80 complex; specifically part of a complex module associated with the N-terminus of INO80. Interacts with UCHL5.

The protein resides in the nucleus. Binds to the DNA consensus sequence 5'-GGGGAATCTCC-3'. Its function is as follows. Putative regulatory component of the chromatin remodeling INO80 complex which is involved in transcriptional regulation, DNA replication and probably DNA repair. Modulates the deubiquitinase activity of UCHL5 in the INO80 complex. This is Nuclear factor related to kappa-B-binding protein (Nfrkb) from Mus musculus (Mouse).